A 263-amino-acid chain; its full sequence is Oxygen-evolving enhancer protein 2-1, chloroplastic (263 aa).

At S153 the chain carries Phosphoserine.

Belongs to the PsbP family. In terms of assembly, interacts with WAK1.

It localises to the plastid. The protein resides in the chloroplast thylakoid lumen. May be involved in the regulation of photosystem II. In Arabidopsis thaliana (Mouse-ear cress), this protein is Oxygen-evolving enhancer protein 2-1, chloroplastic (PSBP1).